The chain runs to 195 residues: Imidazoleglycerol-phosphate dehydratase (195 aa).

Belongs to the imidazoleglycerol-phosphate dehydratase family.

Its subcellular location is the cytoplasm. It catalyses the reaction D-erythro-1-(imidazol-4-yl)glycerol 3-phosphate = 3-(imidazol-4-yl)-2-oxopropyl phosphate + H2O. Its pathway is amino-acid biosynthesis; L-histidine biosynthesis; L-histidine from 5-phospho-alpha-D-ribose 1-diphosphate: step 6/9. In Pelobacter propionicus (strain DSM 2379 / NBRC 103807 / OttBd1), this protein is Imidazoleglycerol-phosphate dehydratase.